The sequence spans 831 residues: Phenylalanine--tRNA ligase beta subunit (831 aa).

Residues 44–155 (GPVDGPVTVG…GAAEPGADGA (112 aa)) form the tRNA-binding domain. A B5 domain is found at 414-489 (WSPPPIRMGV…RLEGLEVIPS (76 aa)). Asp467, Asp473, Glu476, and Glu477 together coordinate Mg(2+). Residues 737 to 830 (SPYPAVFQDV…AAERVGAVLR (94 aa)) form the FDX-ACB domain.

The protein belongs to the phenylalanyl-tRNA synthetase beta subunit family. Type 1 subfamily. Tetramer of two alpha and two beta subunits. Mg(2+) serves as cofactor.

Its subcellular location is the cytoplasm. It catalyses the reaction tRNA(Phe) + L-phenylalanine + ATP = L-phenylalanyl-tRNA(Phe) + AMP + diphosphate + H(+). The sequence is that of Phenylalanine--tRNA ligase beta subunit from Mycobacterium bovis (strain ATCC BAA-935 / AF2122/97).